The primary structure comprises 207 residues: 3-isopropylmalate dehydratase small subunit (207 aa).

Belongs to the LeuD family. LeuD type 1 subfamily. As to quaternary structure, heterodimer of LeuC and LeuD.

It catalyses the reaction (2R,3S)-3-isopropylmalate = (2S)-2-isopropylmalate. It participates in amino-acid biosynthesis; L-leucine biosynthesis; L-leucine from 3-methyl-2-oxobutanoate: step 2/4. Functionally, catalyzes the isomerization between 2-isopropylmalate and 3-isopropylmalate, via the formation of 2-isopropylmaleate. In Gluconacetobacter diazotrophicus (strain ATCC 49037 / DSM 5601 / CCUG 37298 / CIP 103539 / LMG 7603 / PAl5), this protein is 3-isopropylmalate dehydratase small subunit.